The sequence spans 466 residues: Hepatocyte nuclear factor 3-alpha (466 aa).

Residues 169 to 260 (AKPPYSYISL…GNMFENGCYL (92 aa)) constitute a DNA-binding region (fork-head). The interval 251–288 (GNMFENGCYLRRQKRFKCEKQPGAGGGSGGGGSKGVPE) is essential for DNA binding. A disordered region spans residues 269–358 (EKQPGAGGGS…ASSSAPPISS (90 aa)). Residues 273–284 (GAGGGSGGGGSK) show a composition bias toward gly residues. A phosphoserine mark is found at Ser-303 and Ser-327. 2 stretches are compositionally biased toward low complexity: residues 318 to 328 (GAPAPGPAASP) and 344 to 358 (ELKS…PISS).

Binds DNA as a monomer. Interacts with FOXA2. Interacts with NKX2-1. Interacts with HDAC7. Interacts with the histone H3-H4 heterodimer. Associates with nucleosomes containing histone H2A. Interacts with AR. Interacts with NR0B2. Liver.

The protein resides in the nucleus. In terms of biological role, transcription factor that is involved in embryonic development, establishment of tissue-specific gene expression and regulation of gene expression in differentiated tissues. Is thought to act as a 'pioneer' factor opening the compacted chromatin for other proteins through interactions with nucleosomal core histones and thereby replacing linker histones at target enhancer and/or promoter sites. Binds DNA with the consensus sequence 5'-[AC]A[AT]T[AG]TT[GT][AG][CT]T[CT]-3'. Proposed to play a role in translating the epigenetic signatures into cell type-specific enhancer-driven transcriptional programs. Involved in glucose homeostasis; activates the GCG promoter. Involved in the development of multiple endoderm-derived organ systems such as the liver, pancreas, lungs and prostate; FOXA1 and FOXA2 seem to have at least in part redundant roles. Modulates the transcriptional activity of nuclear hormone receptors. Is required for maximal gene activation mediated by AR in the prostate. Negatively regulates AR transactivation via competition with coactivators such as NCOA2. Is involved in ESR1-mediated transcription. Involved in regulation of apoptosis. Involved in cell cycle regulation. Originally described as a transcription activator for a number of liver genes such as AFP, albumin, tyrosine aminotransferase, PEPCK, etc. Interacts with the cis-acting regulatory regions of these genes. In Rattus norvegicus (Rat), this protein is Hepatocyte nuclear factor 3-alpha (Foxa1).